Here is a 196-residue protein sequence, read N- to C-terminus: Peptidyl-tRNA hydrolase (196 aa).

Residue Tyr-18 coordinates tRNA. His-23 acts as the Proton acceptor in catalysis. TRNA is bound by residues Phe-69, Asn-71, and Asn-117.

Belongs to the PTH family. As to quaternary structure, monomer.

It localises to the cytoplasm. It carries out the reaction an N-acyl-L-alpha-aminoacyl-tRNA + H2O = an N-acyl-L-amino acid + a tRNA + H(+). In terms of biological role, hydrolyzes ribosome-free peptidyl-tRNAs (with 1 or more amino acids incorporated), which drop off the ribosome during protein synthesis, or as a result of ribosome stalling. Catalyzes the release of premature peptidyl moieties from peptidyl-tRNA molecules trapped in stalled 50S ribosomal subunits, and thus maintains levels of free tRNAs and 50S ribosomes. The chain is Peptidyl-tRNA hydrolase from Vibrio campbellii (strain ATCC BAA-1116).